We begin with the raw amino-acid sequence, 446 residues long: MTAKNVGLTSTNAEVRGFIDQNLSPTKGNISFVAFPVSNTNSPTKILPKTLGPINVNVGPQMIISTPQRLTSSGSVLIGSPYTPAPAMVTQTHIAEATGWVPGDRKRARKFIDSDFSESKRSKKGDKNGKGLRHFSMKVCEKVQRKGTTSYNEVADELVSEFTNSNNHLAADSAYDQKNIRRRVYDALNVLMAMNIISKEKKEIKWIGLPTNSAQECQNLEIEKQRRIERIKQKRAQLQELLLQQIAFKNLVQRNRQNEQQNQGPPALNSTIQLPFIIINTSRKTVIDCSISSDKFEYLFNFDNTFEIHDDIEVLKRMGMSFGLESGKCSLEDLKLAKSLVPKALEGYITDISTGPSWLNQGLLLNSTQSVSNLDLTTGATLPQSSVNQGLCLDAEVALATGQFLAPNSHQSSSAASHCSESRGETPCSFNDEDEEDDEEDSSSPE.

At T2 the chain carries N-acetylthreonine. S24 carries the phosphoserine modification. Residues 60 to 82 (PQMIISTPQRLTSSGSVLIGSPY) are interaction with CEBPA. A Nuclear localization signal motif is present at residues 103–118 (GDRKRARKFIDSDFSE). S122 is subject to Phosphoserine. Residues 129 to 210 (GKGLRHFSMK…KKEIKWIGLP (82 aa)) mediate DNA binding. Residues 176-210 (DQKNIRRRVYDALNVLMAMNIISKEKKEIKWIGLP) carry the DEF box motif. The dimerization stretch occupies residues 219–292 (NLEIEKQRRI…RKTVIDCSIS (74 aa)). The tract at residues 229-261 (ERIKQKRAQLQELLLQQIAFKNLVQRNRQNEQQ) is DCB1. A DCB2 region spans residues 274–330 (LPFIIINTSRKTVIDCSISSDKFEYLFNFDNTFEIHDDIEVLKRMGMSFGLESGKCS). Over residues 409–419 (SHQSSSAASHC) the composition is skewed to low complexity. The disordered stretch occupies residues 409 to 446 (SHQSSSAASHCSESRGETPCSFNDEDEEDDEEDSSSPE). The span at 431-446 (NDEDEEDDEEDSSSPE) shows a compositional bias: acidic residues.

This sequence belongs to the E2F/DP family. Component of the DRTF1/E2F transcription factor complex. Forms heterodimers with E2F family members. The complex can interact with hypophosphorylated retinoblastoma protein RB1 and related proteins (RBL1 and RBL2) that inhibit the E2F transactivation domain. During the cell cycle, RB becomes phosphorylated in mid-to-late G1 phase, detaches from the DRTF1/E2F complex rendering E2F transcriptionally active. Viral oncoproteins, notably E1A, T-antigen and HPV E7, are capable of sequestering RB protein, thus releasing the active complex. Interacts with GMCL. Component of the DREAM complex (also named LINC complex) at least composed of E2F4, E2F5, LIN9, LIN37, LIN52, LIN54, MYBL1, MYBL2, RBL1, RBL2, RBBP4, TFDP1 and TFDP2. The complex exists in quiescent cells where it represses cell cycle-dependent genes. It dissociates in S phase when LIN9, LIN37, LIN52 and LIN54 form a subcomplex that binds to MYBL2. The complex TFDP2:E2F1 interacts with CEBPA; the interaction prevents CEBPA binding to target genes promoters and represses its transcriptional activity. Post-translationally, ser-24 is probably phosphorylated by CDK2. As to expression, high levels in heart and skeletal muscle. Also found in placenta, kidney, brain, lung and liver. The presence as well as the abundance of the different transcripts appear to vary significantly in different tissues and cell lines.

It localises to the nucleus. Functionally, can stimulate E2F-dependent transcription. Binds DNA cooperatively with E2F family members through the E2 recognition site, 5'-TTTC[CG]CGC-3', found in the promoter region of a number of genes whose products are involved in cell cycle regulation or in DNA replication. The TFDP2:E2F complex functions in the control of cell-cycle progression from G1 to S phase. The E2F1:DP complex appears to mediate both cell proliferation and apoptosis. Blocks adipocyte differentiation by repressing CEBPA binding to its target gene promoters. In Homo sapiens (Human), this protein is Transcription factor Dp-2 (TFDP2).